The sequence spans 119 residues: Large ribosomal subunit protein uL18 (119 aa).

The protein belongs to the universal ribosomal protein uL18 family. Part of the 50S ribosomal subunit; part of the 5S rRNA/L5/L18/L25 subcomplex. Contacts the 5S and 23S rRNAs.

In terms of biological role, this is one of the proteins that bind and probably mediate the attachment of the 5S RNA into the large ribosomal subunit, where it forms part of the central protuberance. This chain is Large ribosomal subunit protein uL18, found in Solibacter usitatus (strain Ellin6076).